We begin with the raw amino-acid sequence, 1227 residues long: Peroxisomal ATPase PEX1 (1227 aa).

2 disordered regions span residues 251–311 and 443–480; these read NNKN…NKKN and PPTS…TNNM. Positions 264–289 are enriched in acidic residues; the sequence is GDEEEDDDDNEEFDDDDDDDNNNNED. Coiled coils occupy residues 282–315 and 454–519; these read DDNN…NKTI and NNLD…NQFQ. A compositionally biased stretch (basic and acidic residues) spans 290 to 299; sequence DTSKLQKQLD. ATP-binding positions include 609 to 616 and 907 to 914; these read GSHGSGKS and GPTGCGKT. Positions 1096–1107 are enriched in basic and acidic residues; it reads KKRKRKEKEDQS. The interval 1096–1132 is disordered; sequence KKRKRKEKEDQSNKNSSQQQDDFIIFQPKNNDNSISK. The segment covering 1108–1117 has biased composition (low complexity); it reads NKNSSQQQDD. Residues 1123–1132 show a composition bias toward polar residues; it reads PKNNDNSISK.

Belongs to the AAA ATPase family. Interacts with PEX6; forming the PEX1-PEX6 AAA ATPase complex, which is composed of a heterohexamer formed by a trimer of PEX1-PEX6 dimers.

It is found in the cytoplasm. It localises to the cytosol. The protein localises to the peroxisome membrane. The catalysed reaction is ATP + H2O = ADP + phosphate + H(+). Component of the PEX1-PEX6 AAA ATPase complex, a protein dislocase complex that mediates the ATP-dependent extraction of the PEX5 receptor from peroxisomal membranes, an essential step for PEX5 recycling. Specifically recognizes PEX5 monoubiquitinated at 'Cys-11', and pulls it out of the peroxisome lumen through the PEX2-PEX10-PEX12 retrotranslocation channel. Extraction by the PEX1-PEX6 AAA ATPase complex is accompanied by unfolding of the TPR repeats and release of bound cargo from PEX5. This Dictyostelium discoideum (Social amoeba) protein is Peroxisomal ATPase PEX1 (pex1).